Reading from the N-terminus, the 1406-residue chain is MRPFLDDAKRRVDRRLSASKQSISTSRLLPSVLPDRFKDNHDAQVDFTAPPGGVGSREGHMQYMQQSIFSMIAAVGSRSDFHARFDESSDSDGETEGRSQTESPVKKVLGSSNPVNSQTEQRSGSQTSRKSEKDQSSRGRHHRRTISDHKFLRPFKTSSKPEPDTEPSTGDERLRVTLPRRPRSTTPRAAPILSRMVEAQAQFDSKTPSAGRSQNSSQESSIHSSHESSTSPLSTRLMEMFDFNKPEKVLVEYACSLLQSMLLQGYMYVTEGHICFYAYLPRKSTVAIKSGYLHKRGRKNPKYNRYWFSLKGDVLSYYADPSNLYFPSGHVDLRYGISASLAESKEKGREPKEFQVSTDQRTYHFRADSSVSAKEWVKALQKVIFRTHNEGDSVKVSFPIENIIDIEESPMMDFADTFKIRVVEDDDSYAIDEYFFSFFDSGREALTLLKSLVNENASGHSSRTLSPHADRSPRSDRTRRSRNRWSLTSGTSQPGNGSADTHRKRSASTSHLSLGPDAIPTSPVTRHQDPSESILNSFEQGTESSAVWQSMEDGAESASQILHRSDVFQSPTIHNLDKRACSDERSGRRQAGGTARSTLTHVNANKDGSPGEYSKLGNDGKPDREIRHVIHELDQETQGPSKPGPGAPTLNELVKAGTYPLQRAAGFAEYLRTRSKQMSNLLASESMGYIEKVSGMWVGGRRHYGEAEDVLPDDQAVDPEDKEDGCNYGDRFRAHFALPSTEKLQATYFAYLHRVLPLYGKIYISQKKLCFRSLIPGTRTKMILPLKDVENVEKEKGFRFGYQGLVIIIRGHEELFFEFRTSDARDDCAVTLHQHLESVKYLAESGLLAEQEKDESEAAMAEHRMLQEARLDDYGENDIPPLNESSGLHPIFDDPRASIVNFKPAESLRITCLTIGSRGDVQPYIALCKGLLAEGHKPKIATHAEFEPWVRRHGIDFAPVDGDPAELMRICVENGMFTYSFLKEASQKFRGWIDDLLSSAWASCQDSDLLIESPSAMAGIHIAEALRIPYFRAFTMPWSRTRAYPHAFAVPEHKMGGAYNYITYVMFDNVFWKAIAGQVNRWRKNELGLKATTLDKMQPNKVPFLYNYSPSVVPPPLDYPDWIRITGYWFLNEGVDWTPPVDLSAFIQRAREDDKKIVYIGFGSIVVSDPSALTRTVIESVQKADVRCILSKGWSDRLGDPSSAKTEVPLPPEIFQIQAAPHDWLFAQVDAAVHHGGAGTTGASLRAGIPTIIKPFFGDQFFFGSRIEDLGVGICMKKLNVSVFSRALWEATHSERMIIRARDLGAKIRDEDGVATAIQAIYRDLEHAKTLAQQRSIASSTPFSPTPSAKNTAEQGDDDVEDSEEWTFVGDDNEMDMSRRMRDRAISDAEMLPDRLLTNSIHGAGR.

The disordered stretch occupies residues 83-231 (ARFDESSDSD…IHSSHESSTS (149 aa)). The span at 110–128 (GSSNPVNSQTEQRSGSQTS) shows a compositional bias: polar residues. Over residues 209-231 (SAGRSQNSSQESSIHSSHESSTS) the composition is skewed to low complexity. Positions 236–286 (RLMEMFDFNKPEKVLVEYACSLLQSMLLQGYMYVTEGHICFYAYLPRKSTV) constitute a GRAM 1 domain. Residues 286–385 (VAIKSGYLHK…WVKALQKVIF (100 aa)) form the PH domain. Disordered stretches follow at residues 457–558 (ASGH…AESA) and 576–622 (LDKR…DGKP). A compositionally biased stretch (basic and acidic residues) spans 468–478 (HADRSPRSDRT). Composition is skewed to polar residues over residues 490-499 (GTSQPGNGSA) and 531-548 (SESILNSFEQGTESSAVW). The span at 576 to 587 (LDKRACSDERSG) shows a compositional bias: basic and acidic residues. Residues 730–796 (DRFRAHFALP…KDVENVEKEK (67 aa)) enclose the GRAM 2 domain. UDP-alpha-D-glucose contacts are provided by serine 917, arginine 918, aspartate 920, alanine 1220, histidine 1222, histidine 1235, glycine 1239, threonine 1240, aspartate 1259, and glutamine 1260. Residues 1334–1406 (QRSIASSTPF…LTNSIHGAGR (73 aa)) form a disordered region. Residues 1336–1349 (SIASSTPFSPTPSA) show a composition bias toward low complexity. A compositionally biased stretch (acidic residues) spans 1355–1375 (QGDDDVEDSEEWTFVGDDNEM). The span at 1376–1387 (DMSRRMRDRAIS) shows a compositional bias: basic and acidic residues. Over residues 1397 to 1406 (LTNSIHGAGR) the composition is skewed to polar residues.

This sequence belongs to the glycosyltransferase 28 family.

The protein resides in the cytoplasm. The protein localises to the preautophagosomal structure membrane. The catalysed reaction is a sterol + UDP-alpha-D-glucose = a sterol 3-beta-D-glucoside + UDP + H(+). The enzyme catalyses ergosterol + UDP-alpha-D-glucose = ergosteryl 3-beta-D-glucoside + UDP + H(+). Functionally, sterol glycosyltransferase responsible for the glycosylation of ergosterol to form ergosterol-glucoside. This chain is Sterol 3-beta-glucosyltransferase, found in Aspergillus clavatus (strain ATCC 1007 / CBS 513.65 / DSM 816 / NCTC 3887 / NRRL 1 / QM 1276 / 107).